The chain runs to 249 residues: uncharacterized protein (249 aa).

One can recognise an S4 RNA-binding domain in the interval 7-64 (PRVHVFLAEKGVGSRRFCEELIRKKLVRVNNTIAKLGDKVTLGDRIIYKKQIFVFKDF). D112 serves as the catalytic Nucleophile.

This sequence belongs to the pseudouridine synthase RsuA family.

It catalyses the reaction a uridine in RNA = a pseudouridine in RNA. This is an uncharacterized protein from Borreliella burgdorferi (strain ATCC 35210 / DSM 4680 / CIP 102532 / B31) (Borrelia burgdorferi).